Reading from the N-terminus, the 445-residue chain is Chromosome partition protein MukF (445 aa).

A leucine-zipper region spans residues 213-241; the sequence is LSETSATLRELQDTLQAAGDELQTQILDI.

It belongs to the MukF family. In terms of assembly, interacts, and probably forms a ternary complex, with MukE and MukB via its C-terminal region. The complex formation is stimulated by calcium or magnesium. It is required for an interaction between MukE and MukB.

It is found in the cytoplasm. The protein resides in the nucleoid. Involved in chromosome condensation, segregation and cell cycle progression. May participate in facilitating chromosome segregation by condensation DNA from both sides of a centrally located replisome during cell division. Not required for mini-F plasmid partitioning. Probably acts via its interaction with MukB and MukE. Overexpression results in anucleate cells. It has a calcium binding activity. The chain is Chromosome partition protein MukF from Vibrio cholerae serotype O1 (strain ATCC 39315 / El Tor Inaba N16961).